Consider the following 289-residue polypeptide: Acetylglutamate kinase (289 aa).

Substrate contacts are provided by residues 65-66 (GG), arginine 87, and asparagine 187.

The protein belongs to the acetylglutamate kinase family. ArgB subfamily.

It is found in the cytoplasm. It carries out the reaction N-acetyl-L-glutamate + ATP = N-acetyl-L-glutamyl 5-phosphate + ADP. The protein operates within amino-acid biosynthesis; L-arginine biosynthesis; N(2)-acetyl-L-ornithine from L-glutamate: step 2/4. Its function is as follows. Catalyzes the ATP-dependent phosphorylation of N-acetyl-L-glutamate. In Chromobacterium violaceum (strain ATCC 12472 / DSM 30191 / JCM 1249 / CCUG 213 / NBRC 12614 / NCIMB 9131 / NCTC 9757 / MK), this protein is Acetylglutamate kinase.